The chain runs to 99 residues: Duplicate procyclin (99 aa).

This is Duplicate procyclin from Trypanosoma brucei brucei.